Consider the following 299-residue polypeptide: Homoserine kinase (299 aa).

Position 84–94 (84–94) interacts with ATP; that stretch reads PISRGLGSSSA.

Belongs to the GHMP kinase family. Homoserine kinase subfamily.

The protein resides in the cytoplasm. The catalysed reaction is L-homoserine + ATP = O-phospho-L-homoserine + ADP + H(+). It participates in amino-acid biosynthesis; L-threonine biosynthesis; L-threonine from L-aspartate: step 4/5. Its function is as follows. Catalyzes the ATP-dependent phosphorylation of L-homoserine to L-homoserine phosphate. The protein is Homoserine kinase of Helicobacter hepaticus (strain ATCC 51449 / 3B1).